Here is a 493-residue protein sequence, read N- to C-terminus: Hexokinase (493 aa).

The region spanning 27-481 (EELSWRINKF…SGKGAAITAA (455 aa)) is the Hexokinase domain. Residues 91 to 239 (TGQEKGTYYA…AIPAKVCCVL (149 aa)) form a hexokinase small subdomain region. 102–107 (DFGGTN) contacts ATP. The tract at residues 177-203 (SVGFTFSFPCTSPSINCSILIDWTKGF) is glucose-binding. The interval 240–470 (NDAVGTLMSC…ENLIIIPADD (231 aa)) is hexokinase large subdomain.

The protein belongs to the hexokinase family.

It carries out the reaction a D-hexose + ATP = a D-hexose 6-phosphate + ADP + H(+). It catalyses the reaction D-mannose + ATP = D-mannose 6-phosphate + ADP + H(+). The catalysed reaction is D-fructose + ATP = D-fructose 6-phosphate + ADP + H(+). The enzyme catalyses D-glucose + ATP = D-glucose 6-phosphate + ADP + H(+). It participates in carbohydrate metabolism; hexose metabolism. Its pathway is carbohydrate degradation; glycolysis; D-glyceraldehyde 3-phosphate and glycerone phosphate from D-glucose: step 1/4. Its function is as follows. Catalyzes the phosphorylation of various hexoses to hexose 6-phosphate. This is Hexokinase (HK) from Plasmodium falciparum.